A 1469-amino-acid polypeptide reads, in one-letter code: Protein BCL9 homolog (1469 aa).

Residues 1 to 16 (MLSTTMPRSPTQQQPQ) show a composition bias toward polar residues. 5 disordered regions span residues 1–131 (MLST…NVSA), 161–187 (SNKA…KEEP), 200–222 (EERE…NAQD), 422–442 (ENSK…QSDP), and 454–474 (GGSS…DSIS). Serine 9 carries the phosphoserine modification. Threonine 11 carries the post-translational modification Phosphothreonine. Residues 17-34 (PNSDASSTSASGSNPGAA) show a composition bias toward low complexity. 2 stretches are compositionally biased toward polar residues: residues 40–60 (SAAS…TLSP) and 90–113 (SGNN…NSCL). The span at 116–130 (SPQNSSEHSNSSNVS) shows a compositional bias: low complexity. Residue serine 206 is modified to Phosphoserine. Threonine 208 carries the phosphothreonine modification. Serine 210 is modified (phosphoserine). Polar residues-rich tracts occupy residues 422 to 438 (ENSK…SFVD) and 455 to 474 (GSSN…DSIS). Residues 511–555 (SLQGVKVPDENLTPQQRQHREEQLAKIKKMNQFLFPENENSVGAN) form an ARM-binding region. Disordered regions lie at residues 728-830 (GGKP…TSTV), 844-913 (CFQA…RSPV), and 961-991 (QASA…PPPN). The segment covering 731-745 (PRQVTGTVVPQQQTP) has biased composition (low complexity). Polar residues predominate over residues 770–781 (IQRSASVPIATQ). Positions 782–796 (SPNPSSPNNLSLPSP) are enriched in low complexity. Composition is skewed to polar residues over residues 806-830 (PTNS…TSTV) and 844-880 (CFQA…TPLS). Phosphoserine is present on residues serine 883, serine 905, and serine 911. Positions 904–913 (PSPQGQRSPV) are enriched in polar residues.

Belongs to the BCL9 family. As to quaternary structure, binds to ARM and PYGO.

It localises to the nucleus. In terms of biological role, involved in signal transduction through the Wnt pathway. This chain is Protein BCL9 homolog (lgs), found in Drosophila melanogaster (Fruit fly).